Here is a 353-residue protein sequence, read N- to C-terminus: 4-hydroxy-3-methylbut-2-en-1-yl diphosphate synthase (flavodoxin) (353 aa).

The [4Fe-4S] cluster site is built by Cys263, Cys266, Cys298, and Glu305.

This sequence belongs to the IspG family. It depends on [4Fe-4S] cluster as a cofactor.

The catalysed reaction is (2E)-4-hydroxy-3-methylbut-2-enyl diphosphate + oxidized [flavodoxin] + H2O + 2 H(+) = 2-C-methyl-D-erythritol 2,4-cyclic diphosphate + reduced [flavodoxin]. It participates in isoprenoid biosynthesis; isopentenyl diphosphate biosynthesis via DXP pathway; isopentenyl diphosphate from 1-deoxy-D-xylulose 5-phosphate: step 5/6. Converts 2C-methyl-D-erythritol 2,4-cyclodiphosphate (ME-2,4cPP) into 1-hydroxy-2-methyl-2-(E)-butenyl 4-diphosphate. This Geobacter sulfurreducens (strain ATCC 51573 / DSM 12127 / PCA) protein is 4-hydroxy-3-methylbut-2-en-1-yl diphosphate synthase (flavodoxin).